The following is a 441-amino-acid chain: Methylenetetrahydrofolate--tRNA-(uracil-5-)-methyltransferase TrmFO (441 aa).

Residue 11-16 (GAGLAG) participates in FAD binding.

It belongs to the MnmG family. TrmFO subfamily. FAD is required as a cofactor.

It localises to the cytoplasm. The catalysed reaction is uridine(54) in tRNA + (6R)-5,10-methylene-5,6,7,8-tetrahydrofolate + NADH + H(+) = 5-methyluridine(54) in tRNA + (6S)-5,6,7,8-tetrahydrofolate + NAD(+). It carries out the reaction uridine(54) in tRNA + (6R)-5,10-methylene-5,6,7,8-tetrahydrofolate + NADPH + H(+) = 5-methyluridine(54) in tRNA + (6S)-5,6,7,8-tetrahydrofolate + NADP(+). Catalyzes the folate-dependent formation of 5-methyl-uridine at position 54 (M-5-U54) in all tRNAs. The sequence is that of Methylenetetrahydrofolate--tRNA-(uracil-5-)-methyltransferase TrmFO from Lactiplantibacillus plantarum (strain ATCC BAA-793 / NCIMB 8826 / WCFS1) (Lactobacillus plantarum).